A 351-amino-acid chain; its full sequence is Fructose-1,6-bisphosphatase class 1 1 (351 aa).

Glutamate 84, aspartate 106, leucine 108, and aspartate 109 together coordinate Mg(2+). Substrate is bound by residues 109-112 (DGSS) and asparagine 205. Position 277 (glutamate 277) interacts with Mg(2+).

This sequence belongs to the FBPase class 1 family. Homotetramer. Mg(2+) is required as a cofactor.

Its subcellular location is the cytoplasm. It carries out the reaction beta-D-fructose 1,6-bisphosphate + H2O = beta-D-fructose 6-phosphate + phosphate. It participates in carbohydrate biosynthesis; Calvin cycle. The protein is Fructose-1,6-bisphosphatase class 1 1 of Methylibium petroleiphilum (strain ATCC BAA-1232 / LMG 22953 / PM1).